A 381-amino-acid polypeptide reads, in one-letter code: Ribosome assembly 1 protein (381 aa).

An N-acetylmethionine modification is found at Met-1. 3 disordered regions span residues 1-38 (MNYN…IKRQ), 164-216 (KDTF…DRDE), and 350-381 (FGSS…TRNK). At Ser-172 the chain carries Phosphoserine. Basic residues predominate over residues 359-371 (NHYKPNYKNRKPN).

It is found in the nucleus. In terms of biological role, involved in a late nucleoplasmic step of 60S ribosomal subunit assembly. This chain is Ribosome assembly 1 protein (RSA1), found in Saccharomyces cerevisiae (strain ATCC 204508 / S288c) (Baker's yeast).